Reading from the N-terminus, the 72-residue chain is Neuropeptide IMFamide (72 aa).

Positions 1 to 24 (MMRFTIGVVCLVAVLLSLAEVSEA) are cleaved as a signal peptide. Phe-36 is modified (phenylalanine amide). The propeptide occupies 40–72 (GPTEYDQRGKTFTALCEIATEACQAWFPSTENK).

As to expression, expressed in corpora cardiaca (CC), corpora allata (CA), antennal lobe (AL) and gnathal ganglion (GNG) (at protein level). Expression detected in only a few animals (at protein level).

The protein localises to the secreted. This chain is Neuropeptide IMFamide, found in Agrotis ipsilon (Black cutworm moth).